The primary structure comprises 444 residues: Histidinol dehydrogenase (444 aa).

Residues tyrosine 135, glutamine 199, and asparagine 227 each coordinate NAD(+). Substrate-binding residues include threonine 250, glutamine 272, and histidine 275. Glutamine 272 and histidine 275 together coordinate Zn(2+). Catalysis depends on proton acceptor residues glutamate 341 and histidine 342. Residues histidine 342, aspartate 375, glutamate 429, and histidine 434 each coordinate substrate. Zn(2+) is bound at residue aspartate 375. Histidine 434 provides a ligand contact to Zn(2+).

The protein belongs to the histidinol dehydrogenase family. Zn(2+) is required as a cofactor.

The enzyme catalyses L-histidinol + 2 NAD(+) + H2O = L-histidine + 2 NADH + 3 H(+). It functions in the pathway amino-acid biosynthesis; L-histidine biosynthesis; L-histidine from 5-phospho-alpha-D-ribose 1-diphosphate: step 9/9. Catalyzes the sequential NAD-dependent oxidations of L-histidinol to L-histidinaldehyde and then to L-histidine. This chain is Histidinol dehydrogenase (hisD), found in Mycobacterium bovis (strain ATCC BAA-935 / AF2122/97).